Here is a 514-residue protein sequence, read N- to C-terminus: Bifunctional purine biosynthesis protein PurH (514 aa).

One can recognise an MGS-like domain in the interval 1-146 (MPPLALLSTS…KNFAHVTVLC (146 aa)).

The protein belongs to the PurH family.

It catalyses the reaction (6R)-10-formyltetrahydrofolate + 5-amino-1-(5-phospho-beta-D-ribosyl)imidazole-4-carboxamide = 5-formamido-1-(5-phospho-D-ribosyl)imidazole-4-carboxamide + (6S)-5,6,7,8-tetrahydrofolate. It carries out the reaction IMP + H2O = 5-formamido-1-(5-phospho-D-ribosyl)imidazole-4-carboxamide. It functions in the pathway purine metabolism; IMP biosynthesis via de novo pathway; 5-formamido-1-(5-phospho-D-ribosyl)imidazole-4-carboxamide from 5-amino-1-(5-phospho-D-ribosyl)imidazole-4-carboxamide (10-formyl THF route): step 1/1. Its pathway is purine metabolism; IMP biosynthesis via de novo pathway; IMP from 5-formamido-1-(5-phospho-D-ribosyl)imidazole-4-carboxamide: step 1/1. This is Bifunctional purine biosynthesis protein PurH from Cyanothece sp. (strain PCC 7425 / ATCC 29141).